A 246-amino-acid polypeptide reads, in one-letter code: 1-(5-phosphoribosyl)-5-[(5-phosphoribosylamino)methylideneamino] imidazole-4-carboxamide isomerase (246 aa).

D8 acts as the Proton acceptor in catalysis. D130 functions as the Proton donor in the catalytic mechanism.

Belongs to the HisA/HisF family.

The protein resides in the cytoplasm. It carries out the reaction 1-(5-phospho-beta-D-ribosyl)-5-[(5-phospho-beta-D-ribosylamino)methylideneamino]imidazole-4-carboxamide = 5-[(5-phospho-1-deoxy-D-ribulos-1-ylimino)methylamino]-1-(5-phospho-beta-D-ribosyl)imidazole-4-carboxamide. It functions in the pathway amino-acid biosynthesis; L-histidine biosynthesis; L-histidine from 5-phospho-alpha-D-ribose 1-diphosphate: step 4/9. The protein is 1-(5-phosphoribosyl)-5-[(5-phosphoribosylamino)methylideneamino] imidazole-4-carboxamide isomerase of Halorhodospira halophila (strain DSM 244 / SL1) (Ectothiorhodospira halophila (strain DSM 244 / SL1)).